The sequence spans 1441 residues: ABC transporter G family member 41 (1441 aa).

Residues 1 to 14 (MEDKKQQQQQQREE) are compositionally biased toward basic and acidic residues. Positions 1–28 (MEDKKQQQQQQREEAEAEEEAPVVPSSL) are disordered. The region spanning 159 to 432 (ATARGLSRRP…FESCGFKCPE (274 aa)) is the ABC transporter 1 domain. 192-199 (GPPGCGKT) serves as a coordination point for ATP. The 213-residue stretch at 510–722 (DLLKACFARE…AEIGLTGNEF (213 aa)) folds into the ABC transmembrane type-2 1 domain. 6 helical membrane-spanning segments follow: residues 528–548 (FIYITKVVQLGLLAVITGTVF), 566–586 (SLFYALILLLVNGFPELAIAV), 600–620 (FYPAWAYAIPSFILKIPLSLV), 642–662 (FFCQLLILFLVHTGALSLFRC), 672–692 (ASSVGGTMSFLVILLFGGFII), and 758–778 (ASALIGFILLLNVGYAIGLTI). Residues 838 to 1090 (ISFQDVNYYV…NVIHYFETIP (253 aa)) enclose the ABC transporter 2 domain. 883-890 (GVTGAGKT) is a binding site for ATP. The region spanning 1163–1379 (EQLKACIWKQ…TLNVFFTTQF (217 aa)) is the ABC transmembrane type-2 2 domain. A run of 7 helical transmembrane segments spans residues 1187 to 1207 (ILFITISCIVFGVLFWQQGDI), 1215 to 1235 (GLFTILGCMYGTTLFTGINNC), 1272 to 1292 (IPYVLVQILLIMFIAYPMIGY), 1300 to 1320 (FWFMYTIACTLLYFLYFGMMI), 1329 to 1349 (VASILASMFYTLQNLMSGFIV), 1357 to 1377 (WWIWLYYTSPLSWTLNVFFTT), and 1413 to 1433 (LAAIILAMFPILFAILFGLSI).

Belongs to the ABC transporter superfamily. ABCG family. PDR (TC 3.A.1.205) subfamily.

It localises to the membrane. In terms of biological role, may be a general defense protein. This Oryza sativa subsp. japonica (Rice) protein is ABC transporter G family member 41.